A 329-amino-acid chain; its full sequence is ADP-L-glycero-D-manno-heptose-6-epimerase (329 aa).

NADP(+)-binding positions include 10 to 11 (FI), 31 to 32 (DD), Lys-38, Lys-53, 74 to 78 (QGACS), and Asn-91. Tyr-138 functions as the Proton acceptor in the catalytic mechanism. Lys-142 is an NADP(+) binding site. Asn-167 contributes to the substrate binding site. Residues Val-168 and Lys-176 each coordinate NADP(+). The active-site Proton acceptor is Lys-176. Substrate-binding positions include Arg-178, His-185, 199–202 (FAGW), Arg-212, and Tyr-291.

This sequence belongs to the NAD(P)-dependent epimerase/dehydratase family. HldD subfamily. In terms of assembly, homopentamer. Requires NADP(+) as cofactor.

It carries out the reaction ADP-D-glycero-beta-D-manno-heptose = ADP-L-glycero-beta-D-manno-heptose. The protein operates within nucleotide-sugar biosynthesis; ADP-L-glycero-beta-D-manno-heptose biosynthesis; ADP-L-glycero-beta-D-manno-heptose from D-glycero-beta-D-manno-heptose 7-phosphate: step 4/4. Its pathway is bacterial outer membrane biogenesis; LPS core biosynthesis. Its function is as follows. Catalyzes the interconversion between ADP-D-glycero-beta-D-manno-heptose and ADP-L-glycero-beta-D-manno-heptose via an epimerization at carbon 6 of the heptose. In Bordetella pertussis (strain Tohama I / ATCC BAA-589 / NCTC 13251), this protein is ADP-L-glycero-D-manno-heptose-6-epimerase.